Reading from the N-terminus, the 147-residue chain is D-aminoacyl-tRNA deacylase (147 aa).

The short motif at 137-138 (GP) is the Gly-cisPro motif, important for rejection of L-amino acids element.

This sequence belongs to the DTD family. In terms of assembly, homodimer.

It localises to the cytoplasm. It carries out the reaction glycyl-tRNA(Ala) + H2O = tRNA(Ala) + glycine + H(+). The enzyme catalyses a D-aminoacyl-tRNA + H2O = a tRNA + a D-alpha-amino acid + H(+). Functionally, an aminoacyl-tRNA editing enzyme that deacylates mischarged D-aminoacyl-tRNAs. Also deacylates mischarged glycyl-tRNA(Ala), protecting cells against glycine mischarging by AlaRS. Acts via tRNA-based rather than protein-based catalysis; rejects L-amino acids rather than detecting D-amino acids in the active site. By recycling D-aminoacyl-tRNA to D-amino acids and free tRNA molecules, this enzyme counteracts the toxicity associated with the formation of D-aminoacyl-tRNA entities in vivo and helps enforce protein L-homochirality. Upon expression in B.subtilis strain 168 confers resistance to D-Tyr and D-Asp, suggesting it acts on both of these amino acids. The protein is D-aminoacyl-tRNA deacylase of Bacillus amyloliquefaciens (Bacillus velezensis).